Consider the following 372-residue polypeptide: Anhydro-N-acetylmuramic acid kinase (372 aa).

Residue G21–D28 coordinates ATP.

Belongs to the anhydro-N-acetylmuramic acid kinase family.

It carries out the reaction 1,6-anhydro-N-acetyl-beta-muramate + ATP + H2O = N-acetyl-D-muramate 6-phosphate + ADP + H(+). Its pathway is amino-sugar metabolism; 1,6-anhydro-N-acetylmuramate degradation. It participates in cell wall biogenesis; peptidoglycan recycling. Its function is as follows. Catalyzes the specific phosphorylation of 1,6-anhydro-N-acetylmuramic acid (anhMurNAc) with the simultaneous cleavage of the 1,6-anhydro ring, generating MurNAc-6-P. Is required for the utilization of anhMurNAc either imported from the medium or derived from its own cell wall murein, and thus plays a role in cell wall recycling. This chain is Anhydro-N-acetylmuramic acid kinase, found in Bordetella avium (strain 197N).